A 122-amino-acid polypeptide reads, in one-letter code: Large ribosomal subunit protein uL14 (122 aa).

It belongs to the universal ribosomal protein uL14 family. In terms of assembly, part of the 50S ribosomal subunit. Forms a cluster with proteins L3 and L19. In the 70S ribosome, L14 and L19 interact and together make contacts with the 16S rRNA in bridges B5 and B8.

In terms of biological role, binds to 23S rRNA. Forms part of two intersubunit bridges in the 70S ribosome. In Chlorobium phaeobacteroides (strain DSM 266 / SMG 266 / 2430), this protein is Large ribosomal subunit protein uL14.